Here is a 131-residue protein sequence, read N- to C-terminus: L-aspartate semialdehyde sulfurtransferase iron-sulfur subunit (131 aa).

4Fe-4S ferredoxin-type domains lie at Lys-73 to Asp-102 and Tyr-103 to Glu-131. Positions 82, 85, 88, 92, 112, 115, 118, and 122 each coordinate [4Fe-4S] cluster.

May form a complex with MJ0100. It depends on [4Fe-4S] cluster as a cofactor.

Its pathway is amino-acid biosynthesis. Its function is as follows. Required for O-acetylhomoserine sulfhydrylase (OAHS)-independent homocysteine (Hcy) biosynthesis. Together with MJ0100, catalyzes the condensation of sulfide with aspartate semialdehyde to generate homocysteine. May be involved in the reduction of the disulfide formed in MJ0100. The sequence is that of L-aspartate semialdehyde sulfurtransferase iron-sulfur subunit from Methanocaldococcus jannaschii (strain ATCC 43067 / DSM 2661 / JAL-1 / JCM 10045 / NBRC 100440) (Methanococcus jannaschii).